The chain runs to 1034 residues: DNA polymerase I B, chloroplastic/mitochondrial (1034 aa).

The N-terminal 55 residues, 1 to 55, are a transit peptide targeting the chloroplast and mitochondrion; that stretch reads MGVSLRHLSPSSFWVSRRPRVSSSILSFLVPRRRILCTRKVAIIKGNAGYSTATD. The region spanning 270 to 468 is the 3'-5' exonuclease domain; it reads ACDTEVSRID…LYESMKKQLQ (199 aa). Positions 700–1030 are polymerase; the sequence is HAIAALCEVC…SVDAKCAQNW (331 aa).

The protein belongs to the DNA polymerase type-A family. Expressed in shoot apical meristem.

The protein localises to the mitochondrion. It localises to the plastid. Its subcellular location is the chloroplast. The catalysed reaction is DNA(n) + a 2'-deoxyribonucleoside 5'-triphosphate = DNA(n+1) + diphosphate. With respect to regulation, not inhibited by aphidicolin. In terms of biological role, in addition to polymerase activity, this DNA polymerase exhibits 5'-3' exonuclease activity. Required for DNA replication and accumulation in plastids and mitochondria. In Arabidopsis thaliana (Mouse-ear cress), this protein is DNA polymerase I B, chloroplastic/mitochondrial (POLIB).